Here is a 237-residue protein sequence, read N- to C-terminus: Uridylate kinase (237 aa).

An ATP-binding site is contributed by 9–12 (KLSG). Residues 17-22 (GSQGYG) are involved in allosteric activation by GTP. Residue glycine 51 coordinates UMP. Positions 52 and 56 each coordinate ATP. UMP-binding positions include aspartate 71 and 132–139 (CGNPFFTT). The ATP site is built by threonine 159, tyrosine 165, and aspartate 168.

It belongs to the UMP kinase family. In terms of assembly, homohexamer.

It localises to the cytoplasm. The catalysed reaction is UMP + ATP = UDP + ADP. It participates in pyrimidine metabolism; CTP biosynthesis via de novo pathway; UDP from UMP (UMPK route): step 1/1. Allosterically activated by GTP. Inhibited by UTP. Its function is as follows. Catalyzes the reversible phosphorylation of UMP to UDP. The polypeptide is Uridylate kinase (Synechococcus sp. (strain CC9605)).